Consider the following 186-residue polypeptide: Shikimate kinase (186 aa).

15-20 (GAGKTT) contributes to the ATP binding site. Thr-19 contributes to the Mg(2+) binding site. The substrate site is built by Asp-37, Arg-61, and Gly-83. Arg-121 contacts ATP. Arg-140 is a binding site for substrate.

The protein belongs to the shikimate kinase family. In terms of assembly, monomer. Requires Mg(2+) as cofactor.

The protein resides in the cytoplasm. The catalysed reaction is shikimate + ATP = 3-phosphoshikimate + ADP + H(+). It participates in metabolic intermediate biosynthesis; chorismate biosynthesis; chorismate from D-erythrose 4-phosphate and phosphoenolpyruvate: step 5/7. In terms of biological role, catalyzes the specific phosphorylation of the 3-hydroxyl group of shikimic acid using ATP as a cosubstrate. This chain is Shikimate kinase, found in Psychrobacter cryohalolentis (strain ATCC BAA-1226 / DSM 17306 / VKM B-2378 / K5).